A 274-amino-acid chain; its full sequence is Elongation factor Ts (274 aa).

The tract at residues 76–79 (TDFV) is involved in Mg(2+) ion dislocation from EF-Tu.

The protein belongs to the EF-Ts family.

It is found in the cytoplasm. In terms of biological role, associates with the EF-Tu.GDP complex and induces the exchange of GDP to GTP. It remains bound to the aminoacyl-tRNA.EF-Tu.GTP complex up to the GTP hydrolysis stage on the ribosome. This Mycobacterium sp. (strain JLS) protein is Elongation factor Ts.